Here is a 234-residue protein sequence, read N- to C-terminus: Ubiquitin thioesterase OTUB2 (234 aa).

The 192-residue stretch at 40-231 folds into the OTU domain; that stretch reads TSIRKTKGDG…TSHYNILYAA (192 aa). Asp-48 is a catalytic residue. Catalysis depends on Cys-51, which acts as the Nucleophile. Active-site residues include His-205 and His-224.

The protein belongs to the peptidase C65 family.

It carries out the reaction Thiol-dependent hydrolysis of ester, thioester, amide, peptide and isopeptide bonds formed by the C-terminal Gly of ubiquitin (a 76-residue protein attached to proteins as an intracellular targeting signal).. Functionally, hydrolase that can remove conjugated ubiquitin from proteins in vitro and may therefore play an important regulatory role at the level of protein turnover by preventing degradation. Mediates deubiquitination of 'Lys-11'-,'Lys-48'- and 'Lys-63'-linked polyubiquitin chains, with a preference for 'Lys-63'-linked polyubiquitin chains. This chain is Ubiquitin thioesterase OTUB2 (Otub2), found in Mus musculus (Mouse).